The chain runs to 341 residues: Fructose-1,6-bisphosphatase, cytosolic (341 aa).

Mg(2+)-binding residues include glutamate 100, aspartate 121, leucine 123, and aspartate 124. Substrate-binding positions include aspartate 124–serine 127, asparagine 215, tyrosine 247, tyrosine 267, and lysine 277. Glutamate 283 serves as a coordination point for Mg(2+).

The protein belongs to the FBPase class 1 family. Mg(2+) is required as a cofactor.

Its subcellular location is the cytoplasm. The catalysed reaction is beta-D-fructose 1,6-bisphosphate + H2O = beta-D-fructose 6-phosphate + phosphate. The protein is Fructose-1,6-bisphosphatase, cytosolic (FBPban1) of Musa acuminata (Banana).